Reading from the N-terminus, the 470-residue chain is Chromosomal replication initiator protein DnaA (470 aa).

The domain I, interacts with DnaA modulators stretch occupies residues 1 to 68; the sequence is MENFWSLCLG…SALAEEVLST (68 aa). The tract at residues 68-133 is domain II; the sequence is TPVQIELALY…KKPKTLTETS (66 aa). The tract at residues 134 to 350 is domain III, AAA+ region; it reads GLNPAFRFDN…GALNRIIAMA (217 aa). Residues Gly178, Gly180, Lys181, and Thr182 each coordinate ATP. The tract at residues 351-470 is domain IV, binds dsDNA; the sequence is NFTGHAIDVS…IAVLIQVIRD (120 aa).

This sequence belongs to the DnaA family. Oligomerizes as a right-handed, spiral filament on DNA at oriC.

Its subcellular location is the cytoplasm. Plays an essential role in the initiation and regulation of chromosomal replication. ATP-DnaA binds to the origin of replication (oriC) to initiate formation of the DNA replication initiation complex once per cell cycle. Binds the DnaA box (a 9 base pair repeat at the origin) and separates the double-stranded (ds)DNA. Forms a right-handed helical filament on oriC DNA; dsDNA binds to the exterior of the filament while single-stranded (ss)DNA is stabiized in the filament's interior. The ATP-DnaA-oriC complex binds and stabilizes one strand of the AT-rich DNA unwinding element (DUE), permitting loading of DNA polymerase. After initiation quickly degrades to an ADP-DnaA complex that is not apt for DNA replication. Binds acidic phospholipids. This Methylobacillus flagellatus (strain ATCC 51484 / DSM 6875 / VKM B-1610 / KT) protein is Chromosomal replication initiator protein DnaA.